Consider the following 305-residue polypeptide: GTPase Era (305 aa).

The 171-residue stretch at 11–181 (RSGFISFVGR…LDVITRLLPE (171 aa)) folds into the Era-type G domain. A G1 region spans residues 19–26 (GRPNTGKS). 19 to 26 (GRPNTGKS) contacts GTP. Positions 45-49 (ETTRH) are G2. Residues 66–69 (DTPG) are G3. Residues 66 to 70 (DTPGL) and 130 to 133 (TKVD) contribute to the GTP site. Residues 130 to 133 (TKVD) form a G4 region. A G5 region spans residues 160–162 (VSA). One can recognise a KH type-2 domain in the interval 212-291 (LKDELPHSVA…YLDLRIKVLK (80 aa)).

This sequence belongs to the TRAFAC class TrmE-Era-EngA-EngB-Septin-like GTPase superfamily. Era GTPase family. In terms of assembly, monomer.

It is found in the cytoplasm. Its subcellular location is the cell membrane. In terms of biological role, an essential GTPase that binds both GDP and GTP, with rapid nucleotide exchange. Plays a role in 16S rRNA processing and 30S ribosomal subunit biogenesis and possibly also in cell cycle regulation and energy metabolism. In Corynebacterium diphtheriae (strain ATCC 700971 / NCTC 13129 / Biotype gravis), this protein is GTPase Era.